Reading from the N-terminus, the 318-residue chain is Pantothenate kinase (318 aa).

96–103 (GSVAVGKS) contributes to the ATP binding site.

It belongs to the prokaryotic pantothenate kinase family.

It is found in the cytoplasm. It carries out the reaction (R)-pantothenate + ATP = (R)-4'-phosphopantothenate + ADP + H(+). It functions in the pathway cofactor biosynthesis; coenzyme A biosynthesis; CoA from (R)-pantothenate: step 1/5. This Nitrobacter hamburgensis (strain DSM 10229 / NCIMB 13809 / X14) protein is Pantothenate kinase.